The primary structure comprises 500 residues: Trehalose-6-phosphate synthase (500 aa).

Position 28 (Arg28) interacts with D-glucose 6-phosphate. Gly48–Gly49 is a binding site for UDP-alpha-D-glucose. 2 residues coordinate D-glucose 6-phosphate: Tyr108 and Asp162. Arg304 and Lys309 together coordinate UDP-alpha-D-glucose. Arg342 is a binding site for D-glucose 6-phosphate. UDP-alpha-D-glucose is bound at residue Leu407 to Glu411.

The protein belongs to the glycosyltransferase 20 family. In terms of assembly, homotetramer.

It catalyses the reaction ADP-alpha-D-glucose + D-glucose 6-phosphate = alpha,alpha-trehalose 6-phosphate + ADP + H(+). The enzyme catalyses CDP-alpha-D-glucose + D-glucose 6-phosphate = alpha,alpha-trehalose 6-phosphate + CDP + H(+). The catalysed reaction is GDP-alpha-D-glucose + D-glucose 6-phosphate = alpha,alpha-trehalose 6-phosphate + GDP + H(+). It carries out the reaction TDP-alpha-D-glucose + D-glucose 6-phosphate = 5-methyl-UDP + alpha,alpha-trehalose 6-phosphate + H(+). It catalyses the reaction D-glucose 6-phosphate + UDP-alpha-D-glucose = alpha,alpha-trehalose 6-phosphate + UDP + H(+). It functions in the pathway glycan biosynthesis; trehalose biosynthesis. In terms of biological role, probably involved in the osmoprotection via the biosynthesis of trehalose and in the production of glycogen and alpha-glucan via the TreS-Pep2 branch involved in the biosynthesis of maltose-1-phosphate (M1P). Catalyzes the transfer of glucose from UDP-glucose (UDP-Glc) to D-glucose 6-phosphate (Glc-6-P) to form trehalose-6-phosphate. Probably also able to use ADP-Glc, CDP-Glc, GDP-Glc and TDP-Glc as glucosyl donors. The chain is Trehalose-6-phosphate synthase from Mycobacterium bovis (strain ATCC BAA-935 / AF2122/97).